The primary structure comprises 426 residues: Alpha/beta hydrolase pydG (426 aa).

This sequence belongs to the AB hydrolase superfamily. As to quaternary structure, homodimer.

It functions in the pathway mycotoxin biosynthesis. Alpha/beta hydrolasee; part of the gene cluster that mediates the biosynthesis of pyrrocidines, fungal natural products containing a macrocyclic para-cyclophane connected to a decahydrofluorene ring system that show potent antibiotic activities toward Gram-negative bacteria. Within the pathway, pydG catalyzes the Knoevenagel condensation that affords the 3-pyrrolin-2-one ring, using as substrate the polyketide-tyrosyl acyl thioester product of pydA. The pathway begins with the PKS-NRPS pydA which, with the help of the trans-enoyl reductase pydC, synthesizes the polyketide-tyrosyl acyl thioester product which can be reductively off-loaded by the terminal reductase (R) domain in pydA. The alpha/beta hydrolase pydG is then required to catalyze the subsequent Knoevenagel condensation that affords the 3-pyrrolin-2-one ring, whereas the four proteins pydB, pydE, pydX and pydZ then function synergistically to form the cyclophane. PydB and the membrane-bound pydX and pydZ are lipid-binding proteins that can sequester and mold the pdyG product into the inverse S-shape. Binding of the medium chain reductase pydE to the complex would trigger the cascade oxidative cyclization. PydY is involved in the Diels-Alder cycloaddition that forms the decahydrofluorene core. Additional non-enzymatic hydroxylation yields pyrrocidine A2 which can be further reduced into pyrrocidine B by an endogenous reductase. The polypeptide is Alpha/beta hydrolase pydG (Acremonium sp).